A 381-amino-acid polypeptide reads, in one-letter code: MERGMHLGAAAAGEDDLFLHKSLSASTSKRLEAAFRSTPPGMDLSLAPPPRERPASSSSSPLGCFEPADPEGAGLLLPPPGGGGGGSAGSGGGGGGGVGVPGLLVGSAGVGGDPSLSSLPAGAALCLKYGESASRGSVAESSGGEQSPDDDSDGRCELVLRAGVADPRASPGAGGGGAKAAEGCSNAHLHGGASVPPGGLGGGGGGGSSSGSSGGGGGSGSGSGGSSSSSSSSSKKSKEQKALRLNINARERRRMHDLNDALDELRAVIPYAHSPSVRKLSKIATLLLAKNYILMQAQALEEMRRLVAYLNQGQAISAASLPSSAAAAAAAAALHPALGAYEQAAGYPFSAGLPPAASCPEKCALFNSVSSSLCKQCTEKP.

Disordered stretches follow at residues 30 to 94 (RLEA…GGGG), 135 to 154 (RGSV…DSDG), and 188 to 242 (HLHG…EQKA). The segment covering 82–94 (GGGGGSAGSGGGG) has biased composition (gly residues). Gly residues predominate over residues 198 to 225 (GGLGGGGGGGSSSGSSGGGGGSGSGSGG). Residues 242–296 (ALRLNINARERRRMHDLNDALDELRAVIPYAHSPSVRKLSKIATLLLAKNYILMQ) form the bHLH domain.

Interacts with PRDM8. In terms of tissue distribution, brain-specific, with the highest expression in the cerebellum.

It localises to the nucleus. Inhibits DNA binding of TCF3/E47 homodimers and TCF3 (E47)/NEUROD1 heterodimers and acts as a strong repressor of Neurod1 and Myod-responsive genes, probably by heterodimerization with class a basic helix-loop-helix factors. Despite the presence of an intact basic domain, does not bind to DNA. In the brain, may function as an area-specific transcription factor that regulates the postmitotic acquisition of area identities and elucidate the genetic hierarchy between progenitors and postmitotic neurons driving neocortical arealization. May be required for the survival of a specific population of inhibitory neurons in the superficial laminae of the spinal cord dorsal horn that may regulate pruritis. Seems to play a crucial role in the retinogenesis, in the specification of amacrine and bipolar subtypes. Forms with PRDM8 a transcriptional repressor complex controlling genes involved in neural development and neuronal differentiation. This Homo sapiens (Human) protein is Class E basic helix-loop-helix protein 22 (BHLHE22).